Consider the following 129-residue polypeptide: Small ribosomal subunit protein uS11 (129 aa).

The protein belongs to the universal ribosomal protein uS11 family. In terms of assembly, part of the 30S ribosomal subunit. Interacts with proteins S7 and S18. Binds to IF-3.

Functionally, located on the platform of the 30S subunit, it bridges several disparate RNA helices of the 16S rRNA. Forms part of the Shine-Dalgarno cleft in the 70S ribosome. This is Small ribosomal subunit protein uS11 from Bacteroides thetaiotaomicron (strain ATCC 29148 / DSM 2079 / JCM 5827 / CCUG 10774 / NCTC 10582 / VPI-5482 / E50).